The primary structure comprises 570 residues: Probable metalloreductase AIM14 (570 aa).

Residues 1-20 are Extracellular-facing; the sequence is MKESPLITLVKRHSETHFAN. The chain crosses the membrane as a helical span at residues 21 to 41; sequence IKYGYYVLIISLVYLIGLALL. At 42–69 the chain is on the cytoplasmic side; sequence RAFGRRTPSRSSSAFKNKIIYRLYDIDP. Residues 70-90 form a helical membrane-spanning segment; sequence AIHLGILFFAVLIPFYYHYSL. The Extracellular portion of the chain corresponds to 91 to 141; sequence TTQSTVYLKRLGRLSYALIPLNLFLTLRPNWFLRKNCTYTDFIPFHKWFSR. The region spanning 101–219 is the Ferric oxidoreductase domain; sequence LGRLSYALIP…NLVNVAFILL (119 aa). A helical transmembrane segment spans residues 142–162; sequence IITVIGLLHGIFFIIKWAIDD. Residues 163–176 lie on the Cytoplasmic side of the membrane; sequence NVSLKQKLILKTFN. The chain crosses the membrane as a helical span at residues 177–197; the sequence is FAGFIISILVLFLLICSIGPM. The Extracellular portion of the chain corresponds to 198-373; the sequence is RRYNYRLFYI…PEECYSQGTN (176 aa). The region spanning 250 to 388 is the FAD-binding FR-type domain; that stretch reads FAKSLMILNK…GGSGISFALP (139 aa). Residues 374–394 traverse the membrane as a helical segment; that stretch reads IAIICGGSGISFALPLFRHFF. Topologically, residues 395-570 are cytoplasmic; it reads NKENVKYLKM…INFVCETYGL (176 aa). The span at 480 to 505 shows a compositional bias: polar residues; sequence ISNFNSENADSNDNTPETSHSPTKEN. Positions 480-509 are disordered; that stretch reads ISNFNSENADSNDNTPETSHSPTKENGSMI.

This sequence belongs to the ferric reductase (FRE) family. AIM14 subfamily. As to quaternary structure, interacts with ribosomes.

It is found in the membrane. In terms of biological role, probable cell surface metalloreductase. May be involved in iron or copper homeostasis. The chain is Probable metalloreductase AIM14 (AIM14) from Saccharomyces cerevisiae (strain ATCC 204508 / S288c) (Baker's yeast).